The chain runs to 366 residues: Bacteriochlorophyll a protein (366 aa).

5 residues coordinate bacteriochlorophyll a: His111, His146, His290, His297, and His298.

Homotrimer. Each subunit contains 7 molecules of bacteriochlorophyll a.

In terms of biological role, intermediary in the transfer of excitation energy from the chlorophyll to the reaction centers. This Chlorobaculum tepidum (strain ATCC 49652 / DSM 12025 / NBRC 103806 / TLS) (Chlorobium tepidum) protein is Bacteriochlorophyll a protein (fmoA).